A 576-amino-acid polypeptide reads, in one-letter code: High-affinity choline transporter 1 (576 aa).

A helical transmembrane segment spans residues 6-26; the sequence is GIVAIVFFYVLILVVGIWAGR. The Cytoplasmic portion of the chain corresponds to 27 to 51; it reads KSKSSKELESEAGAATEEVMLAGRN. The helical transmembrane segment at 52–72 threads the bilayer; sequence IGTLVGIFTMTATWVGGAYIN. The Extracellular portion of the chain corresponds to 73-82; the sequence is GTAEALYNGG. A helical membrane pass occupies residues 83 to 103; that stretch reads LLGCQAPVGYAISLVMGGLLF. The Cytoplasmic portion of the chain corresponds to 104-126; it reads AKKMREEGYITMLDPFQHKYGQR. Residues 127–147 form a helical membrane-spanning segment; the sequence is IGGLMYVPALLGETFWTAAIL. At 148–165 the chain is on the extracellular side; sequence SALGATLSVILGIDMNAS. A helical membrane pass occupies residues 166–186; that stretch reads VTLSACIAVFYTFTGGYYAVA. Over 187-192 the chain is Cytoplasmic; the sequence is YTDVVQ. Residues 193–213 form a helical membrane-spanning segment; that stretch reads LFCIFVGLWVCVPAAMVHDGA. At 214-233 the chain is on the extracellular side; sequence KDISRNAGDWIGEIGGFKET. Residues 234–254 traverse the membrane as a helical segment; the sequence is SLWIDCMLLLVFGGIPWQVYF. Over 255–270 the chain is Cytoplasmic; that stretch reads QRVLSSKTAHGAQTLS. The helical transmembrane segment at 271–291 threads the bilayer; it reads FVAGVGCILMAIPPALIGAIA. Residues 292 to 319 lie on the Extracellular side of the membrane; that stretch reads RNTDWRMTDYSPWNNGTKVESIPPDKRN. An N-linked (GlcNAc...) asparagine glycan is attached at N306. The chain crosses the membrane as a helical span at residues 320–340; it reads MVVPLVFQYLTPRWVAFIGLG. The Cytoplasmic segment spans residues 341-378; it reads AVSAAVMSSADSSVLSAASMFAHNIWKLTIRPHASEKE. A helical membrane pass occupies residues 379–399; sequence VIIVMRIAIICVGIMATIMAL. The Extracellular portion of the chain corresponds to 400 to 408; that stretch reads TIQSIYGLW. A helical membrane pass occupies residues 409 to 429; that stretch reads YLCADLVYVILFPQLLCVVYM. Topologically, residues 430-437 are cytoplasmic; sequence PRSNTYGS. Residues 438-458 form a helical membrane-spanning segment; it reads LAGYAVGLVLRLIGGEPLVSL. Topologically, residues 459 to 478 are extracellular; the sequence is PAFFHYPMYTDGVQYFPFRT. The chain crosses the membrane as a helical span at residues 479-499; it reads TAMLSSMATIYIVSIQSEKLF. Residues 500–576 are Cytoplasmic-facing; that stretch reads KSGRLSPEWD…DQSYYSTNSN (77 aa). Positions 541 to 576 are disordered; the sequence is APNGTPAPVHPNQQPSDENTLLHPYSDQSYYSTNSN. Positions 566 to 576 are enriched in polar residues; that stretch reads SDQSYYSTNSN.

Belongs to the sodium:solute symporter (SSF) (TC 2.A.21) family. In terms of tissue distribution, detected in the nervous system, including the nerve ring and cholinergic motor neurons of the ventral nerve cord.

It localises to the membrane. Its function is as follows. Imports choline from the extracellular space to the neuron with high affinity. Choline uptake is the rate-limiting step in acetylcholine synthesis. Sodium ion and chloride ion dependent. This Caenorhabditis elegans protein is High-affinity choline transporter 1 (cho-1).